The chain runs to 398 residues: MASMTGGQQMGTNQGKGVVAAGDKLALFLKVFGGEVLTAFARTSVTTSRHMVRSISSGKSAQFPVLGRTQAAYLAPGENLDDKRKDIKHTEKVITIDGLLTADVLIYDIEDAMNHYDVRSEYTSQLGESLAMAADGAVLAEIAGLCNVESKYNENIEGLGTATVIETTQNKAALTDQVALGKEIIAALTKARAALTKNYVPAADRVFYCDPDSYSAILAALMPNAANYAALIDPEKGSIRNVMGFEVVEVPHLTAGGAGTAREGTTGQKHVFPANKGEGNVKVAKDNVIGLFMHRSAVGTVKLRDLALERARRANFQADQIIAKYAMGHGGLRPEAAGAVVFQSGVMLGVASTVAASPEEASVTSTEETLTPAQEAARTRAANKARKEAELAAATAEQ.

The segment at 359–398 (EEASVTSTEETLTPAQEAARTRAANKARKEAELAAATAEQ) is disordered. Positions 362–372 (SVTSTEETLTP) are enriched in polar residues. A compositionally biased stretch (low complexity) spans 373–382 (AQEAARTRAA).

It belongs to the T7virus minor capsid protein family. As to quaternary structure, interacts with the connector protein and the major capsid protein.

Its subcellular location is the virion. Its function is as follows. Assembles with the major capsid protein to form an icosahedral capsid with a T=7 symmetry, about 60 nm in diameter, and consisting of 415 capsid proteins. The major and minor capsid proteins are incorporated into the capsid in about a 90/10 ratio respectively. Once the capsid formed, encapsidates one single copy of the viral genome. The protein is Minor capsid protein of Escherichia coli (Bacteriophage T7).